Reading from the N-terminus, the 89-residue chain is Putative protein T-ENOL (89 aa).

2 disordered regions span residues 1–31 (MASTSARSGDKKDTWPIQAAASLGGGQKASL) and 54–89 (RSHMNPMPDKEKQTKDQGTQISRHVFFTKTRGTDTR).

Specifically expressed in testis (at protein level).

The protein is Putative protein T-ENOL of Rattus norvegicus (Rat).